The sequence spans 459 residues: Argininosuccinate lyase (459 aa).

The protein belongs to the lyase 1 family. Argininosuccinate lyase subfamily.

It is found in the cytoplasm. It catalyses the reaction 2-(N(omega)-L-arginino)succinate = fumarate + L-arginine. It functions in the pathway amino-acid biosynthesis; L-arginine biosynthesis; L-arginine from L-ornithine and carbamoyl phosphate: step 3/3. The sequence is that of Argininosuccinate lyase from Geobacillus sp. (strain WCH70).